The following is a 163-amino-acid chain: Peptide methionine sulfoxide reductase MsrA (163 aa).

Cys-10 is an active-site residue.

This sequence belongs to the MsrA Met sulfoxide reductase family.

The enzyme catalyses L-methionyl-[protein] + [thioredoxin]-disulfide + H2O = L-methionyl-(S)-S-oxide-[protein] + [thioredoxin]-dithiol. The catalysed reaction is [thioredoxin]-disulfide + L-methionine + H2O = L-methionine (S)-S-oxide + [thioredoxin]-dithiol. Its function is as follows. Has an important function as a repair enzyme for proteins that have been inactivated by oxidation. Catalyzes the reversible oxidation-reduction of methionine sulfoxide in proteins to methionine. This is Peptide methionine sulfoxide reductase MsrA from Ruthia magnifica subsp. Calyptogena magnifica.